The chain runs to 118 residues: Ribonuclease P protein component (118 aa).

This sequence belongs to the RnpA family. As to quaternary structure, consists of a catalytic RNA component (M1 or rnpB) and a protein subunit.

The catalysed reaction is Endonucleolytic cleavage of RNA, removing 5'-extranucleotides from tRNA precursor.. RNaseP catalyzes the removal of the 5'-leader sequence from pre-tRNA to produce the mature 5'-terminus. It can also cleave other RNA substrates such as 4.5S RNA. The protein component plays an auxiliary but essential role in vivo by binding to the 5'-leader sequence and broadening the substrate specificity of the ribozyme. The chain is Ribonuclease P protein component from Shewanella oneidensis (strain ATCC 700550 / JCM 31522 / CIP 106686 / LMG 19005 / NCIMB 14063 / MR-1).